The sequence spans 281 residues: 2-dehydro-3-deoxyphosphooctonate aldolase 1 (281 aa).

The protein belongs to the KdsA family.

It localises to the cytoplasm. It catalyses the reaction D-arabinose 5-phosphate + phosphoenolpyruvate + H2O = 3-deoxy-alpha-D-manno-2-octulosonate-8-phosphate + phosphate. It functions in the pathway carbohydrate biosynthesis; 3-deoxy-D-manno-octulosonate biosynthesis; 3-deoxy-D-manno-octulosonate from D-ribulose 5-phosphate: step 2/3. It participates in bacterial outer membrane biogenesis; lipopolysaccharide biosynthesis. The polypeptide is 2-dehydro-3-deoxyphosphooctonate aldolase 1 (kdsA1) (Pseudomonas putida (strain ATCC 47054 / DSM 6125 / CFBP 8728 / NCIMB 11950 / KT2440)).